The following is a 446-amino-acid chain: Tubulin alpha-2 chain (446 aa).

The short motif at 1 to 4 (MREC) is the MREC motif element. Positions 11, 68, 137, 141, 142, 176, 203, and 225 each coordinate GTP. Position 68 (glutamate 68) interacts with Mg(2+). The active site involves glutamate 251.

Belongs to the tubulin family. Dimer of alpha and beta chains. A typical microtubule is a hollow water-filled tube with an outer diameter of 25 nm and an inner diameter of 15 nM. Alpha-beta heterodimers associate head-to-tail to form protofilaments running lengthwise along the microtubule wall with the beta-tubulin subunit facing the microtubule plus end conferring a structural polarity. Microtubules usually have 13 protofilaments but different protofilament numbers can be found in some organisms and specialized cells. It depends on Mg(2+) as a cofactor. In terms of processing, some glutamate residues at the C-terminus are polyglycylated, resulting in polyglycine chains on the gamma-carboxyl group. Glycylation is mainly limited to tubulin incorporated into axonemes (cilia and flagella) whereas glutamylation is prevalent in neuronal cells, centrioles, axonemes, and the mitotic spindle. Both modifications can coexist on the same protein on adjacent residues, and lowering polyglycylation levels increases polyglutamylation, and reciprocally. The precise function of polyglycylation is still unclear. Post-translationally, some glutamate residues at the C-terminus are polyglutamylated, resulting in polyglutamate chains on the gamma-carboxyl group. Polyglutamylation plays a key role in microtubule severing by spastin (SPAST). SPAST preferentially recognizes and acts on microtubules decorated with short polyglutamate tails: severing activity by SPAST increases as the number of glutamates per tubulin rises from one to eight, but decreases beyond this glutamylation threshold. Testis specific.

It localises to the cytoplasm. The protein resides in the cytoskeleton. The enzyme catalyses GTP + H2O = GDP + phosphate + H(+). Tubulin is the major constituent of microtubules, a cylinder consisting of laterally associated linear protofilaments composed of alpha- and beta-tubulin heterodimers. Microtubules grow by the addition of GTP-tubulin dimers to the microtubule end, where a stabilizing cap forms. Below the cap, tubulin dimers are in GDP-bound state, owing to GTPase activity of alpha-tubulin. The protein is Tubulin alpha-2 chain of Gallus gallus (Chicken).